The following is a 227-amino-acid chain: LysM and putative peptidoglycan-binding domain-containing protein 1 (227 aa).

Residues 1-11 (MASPSRQPPPG) show a composition bias toward pro residues. Residues 1 to 22 (MASPSRQPPPGGSGLLQGSRAR) are disordered. Serine 23 and serine 33 each carry phosphoserine. Residues 40–84 (LEHQLEPGDTLAGLALKYGVTMEQIKRANRLYTNDSIFLKKTLYI) form the LysM domain. Residues 97 to 150 (LDSEEEKDGEEKVHPSNSEVWPHSTERKKQETGAGRANGEVLPTPGQETPTPIH) form a disordered region. A phosphoserine mark is found at serine 99, serine 166, serine 194, and serine 212.

In Homo sapiens (Human), this protein is LysM and putative peptidoglycan-binding domain-containing protein 1 (LYSMD1).